Here is a 284-residue protein sequence, read N- to C-terminus: tRNA-cytidine(32) 2-sulfurtransferase (284 aa).

The PP-loop motif motif lies at 45–50; sequence SGGKDS. [4Fe-4S] cluster is bound by residues cysteine 120, cysteine 123, and cysteine 211.

The protein belongs to the TtcA family. As to quaternary structure, homodimer. The cofactor is Mg(2+). [4Fe-4S] cluster is required as a cofactor.

It is found in the cytoplasm. The enzyme catalyses cytidine(32) in tRNA + S-sulfanyl-L-cysteinyl-[cysteine desulfurase] + AH2 + ATP = 2-thiocytidine(32) in tRNA + L-cysteinyl-[cysteine desulfurase] + A + AMP + diphosphate + H(+). Its pathway is tRNA modification. Functionally, catalyzes the ATP-dependent 2-thiolation of cytidine in position 32 of tRNA, to form 2-thiocytidine (s(2)C32). The sulfur atoms are provided by the cysteine/cysteine desulfurase (IscS) system. The sequence is that of tRNA-cytidine(32) 2-sulfurtransferase from Alcanivorax borkumensis (strain ATCC 700651 / DSM 11573 / NCIMB 13689 / SK2).